A 374-amino-acid chain; its full sequence is Ribonuclease D (374 aa).

In terms of domain architecture, 3'-5' exonuclease spans 6-171 (IISTTEDLKK…RATRVILLSK (166 aa)). The HRDC domain occupies 213–292 (DRKSIGVAQE…ARALNKKEVD (80 aa)).

Belongs to the RNase D family. A divalent metal cation is required as a cofactor.

The protein resides in the cytoplasm. It catalyses the reaction Exonucleolytic cleavage that removes extra residues from the 3'-terminus of tRNA to produce 5'-mononucleotides.. Exonuclease involved in the 3' processing of various precursor tRNAs. Initiates hydrolysis at the 3'-terminus of an RNA molecule and releases 5'-mononucleotides. The polypeptide is Ribonuclease D (Desulfotalea psychrophila (strain LSv54 / DSM 12343)).